Consider the following 466-residue polypeptide: Argininosuccinate lyase (466 aa).

Belongs to the lyase 1 family. Argininosuccinate lyase subfamily.

The protein localises to the cytoplasm. It carries out the reaction 2-(N(omega)-L-arginino)succinate = fumarate + L-arginine. It functions in the pathway amino-acid biosynthesis; L-arginine biosynthesis; L-arginine from L-ornithine and carbamoyl phosphate: step 3/3. The sequence is that of Argininosuccinate lyase from Synechococcus sp. (strain ATCC 27144 / PCC 6301 / SAUG 1402/1) (Anacystis nidulans).